The chain runs to 308 residues: MGEIKVSPDYNWFRGTVPLKKIIVDDDDSKIWSLYDAGPRSIRCPLIFLPPVSGTADVFFRQILALTGWGYRVIALQYPVYWDHLEFCDGFRKLLDHLQLDKVHLFGASLGGFLAQKFAEYTHKSPRVHSLILCNSFSDTSIFNQTWTANSFWLMPAFMLKKIVLGNFSSGPVDPMMADAIDFMVDRLESLGQSELASRLTLNCQNSYVEPHKIRDIPVTIMDVFDQSALSTEAKEEMYKLYPNARRAHLKTGGNFPYLCRSAEVNLYVQIHLLQFHGTKYAAIDPSMVSAEELEVQKGSLGISQEEQ.

Residues 87-159 form the AB hydrolase-1 domain; sequence FCDGFRKLLD…NSFWLMPAFM (73 aa). A Phosphoserine modification is found at Ser-304.

Belongs to the AB hydrolase superfamily. As to quaternary structure, interacts with CD4. Interacts with ALDH16A1. Expressed in all tissues tested, including heart, brain, placenta, lung, liver, skeletal muscle, kidney and pancreas. Expressed in J.CaM1.6, HuT 78 and HeLa cell lines (at protein level).

It is found in the cytoplasm. It localises to the cytosol. The protein resides in the membrane. Its subcellular location is the endosome membrane. The protein localises to the golgi apparatus. It is found in the trans-Golgi network membrane. In terms of biological role, may play a role as a negative regulatory factor in CD4-dependent T-cell activation. The protein is Maspardin (SPG21) of Homo sapiens (Human).